The following is a 443-amino-acid chain: Xaa-Pro dipeptidase (443 aa).

Positions 246, 257, 339, 384, and 423 each coordinate Mn(2+).

It belongs to the peptidase M24B family. Bacterial-type prolidase subfamily. Mn(2+) is required as a cofactor.

It catalyses the reaction Xaa-L-Pro dipeptide + H2O = an L-alpha-amino acid + L-proline. Functionally, splits dipeptides with a prolyl residue in the C-terminal position. The polypeptide is Xaa-Pro dipeptidase (Yersinia pestis bv. Antiqua (strain Nepal516)).